Reading from the N-terminus, the 361-residue chain is Hydroxycarboxylate dehydrogenase B (361 aa).

NAD(+) contacts are provided by residues histidine 48, 122-124 (GRI), 178-182 (LLDYA), histidine 234, asparagine 270, and 313-316 (GEWE).

It belongs to the LDH2/MDH2 oxidoreductase family.

The catalysed reaction is 2-hydroxyglutarate + NADP(+) = 2-oxoglutarate + NADPH + H(+). It carries out the reaction 2-hydroxyglutarate + NAD(+) = 2-oxoglutarate + NADH + H(+). It catalyses the reaction 3-phenyllactate + NADP(+) = 3-phenylpyruvate + NADPH + H(+). The enzyme catalyses 3-phenyllactate + NAD(+) = 3-phenylpyruvate + NADH + H(+). The catalysed reaction is (2R)-2-hydroxy-3-(4-hydroxyphenyl)propanoate + NAD(+) = 3-(4-hydroxyphenyl)pyruvate + NADH + H(+). It carries out the reaction (2R)-2-hydroxy-3-(4-hydroxyphenyl)propanoate + NADP(+) = 3-(4-hydroxyphenyl)pyruvate + NADPH + H(+). It catalyses the reaction (2R)-3-(3,4-dihydroxyphenyl)lactate + NADP(+) = 3-(3,4-dihydroxyphenyl)pyruvate + NADPH + H(+). The enzyme catalyses (2R)-3-(3,4-dihydroxyphenyl)lactate + NAD(+) = 3-(3,4-dihydroxyphenyl)pyruvate + NADH + H(+). Catalyzes the NAD(P)H-dependent reduction of 2-oxoglutarate, phenylpyruvate and (4-hydroxyphenyl)pyruvate, leading to the respective 2-hydroxycarboxylate in vitro. Shows a preference for NADPH over NADH as a redox partner. Do not catalyze the reverse reactions. The chain is Hydroxycarboxylate dehydrogenase B from Escherichia coli O157:H7.